The following is a 246-amino-acid chain: Adenosylcobinamide-GDP ribazoletransferase (246 aa).

Transmembrane regions (helical) follow at residues 30-50 (VNWYPAVGLVIGLLLWGVHQA), 51-71 (GLVLFSPWIAAILTLIAWVYV), 105-125 (VGAMGVLAAIMLLLIKAGAVA), 131-151 (GWGSFLIVAPVAARTHVLLSI), 167-189 (ISSGLSVSSIIVSYIIVFAAGWY), 193-210 (LQVMTAIFLSLLFALWFS), and 226-246 (GAVIESSEAVVLLVLVGSWWL).

This sequence belongs to the CobS family. It depends on Mg(2+) as a cofactor.

Its subcellular location is the cell membrane. It catalyses the reaction alpha-ribazole + adenosylcob(III)inamide-GDP = adenosylcob(III)alamin + GMP + H(+). It carries out the reaction alpha-ribazole 5'-phosphate + adenosylcob(III)inamide-GDP = adenosylcob(III)alamin 5'-phosphate + GMP + H(+). It participates in cofactor biosynthesis; adenosylcobalamin biosynthesis; adenosylcobalamin from cob(II)yrinate a,c-diamide: step 7/7. Its function is as follows. Joins adenosylcobinamide-GDP and alpha-ribazole to generate adenosylcobalamin (Ado-cobalamin). Also synthesizes adenosylcobalamin 5'-phosphate from adenosylcobinamide-GDP and alpha-ribazole 5'-phosphate. This Brevibacillus brevis (strain 47 / JCM 6285 / NBRC 100599) protein is Adenosylcobinamide-GDP ribazoletransferase.